Consider the following 156-residue polypeptide: SsrA-binding protein (156 aa).

It belongs to the SmpB family.

The protein localises to the cytoplasm. Its function is as follows. Required for rescue of stalled ribosomes mediated by trans-translation. Binds to transfer-messenger RNA (tmRNA), required for stable association of tmRNA with ribosomes. tmRNA and SmpB together mimic tRNA shape, replacing the anticodon stem-loop with SmpB. tmRNA is encoded by the ssrA gene; the 2 termini fold to resemble tRNA(Ala) and it encodes a 'tag peptide', a short internal open reading frame. During trans-translation Ala-aminoacylated tmRNA acts like a tRNA, entering the A-site of stalled ribosomes, displacing the stalled mRNA. The ribosome then switches to translate the ORF on the tmRNA; the nascent peptide is terminated with the 'tag peptide' encoded by the tmRNA and targeted for degradation. The ribosome is freed to recommence translation, which seems to be the essential function of trans-translation. The protein is SsrA-binding protein of Maricaulis maris (strain MCS10) (Caulobacter maris).